The chain runs to 325 residues: Tetraacyldisaccharide 4'-kinase (325 aa).

Residue 55-62 (TAGGNGKT) participates in ATP binding.

This sequence belongs to the LpxK family.

The enzyme catalyses a lipid A disaccharide + ATP = a lipid IVA + ADP + H(+). It participates in glycolipid biosynthesis; lipid IV(A) biosynthesis; lipid IV(A) from (3R)-3-hydroxytetradecanoyl-[acyl-carrier-protein] and UDP-N-acetyl-alpha-D-glucosamine: step 6/6. In terms of biological role, transfers the gamma-phosphate of ATP to the 4'-position of a tetraacyldisaccharide 1-phosphate intermediate (termed DS-1-P) to form tetraacyldisaccharide 1,4'-bis-phosphate (lipid IVA). The sequence is that of Tetraacyldisaccharide 4'-kinase from Enterobacter sp. (strain 638).